Here is an 875-residue protein sequence, read N- to C-terminus: Phosphoenolpyruvate carboxylase (875 aa).

Catalysis depends on residues H137 and K542.

It belongs to the PEPCase type 1 family. Mg(2+) serves as cofactor.

It carries out the reaction oxaloacetate + phosphate = phosphoenolpyruvate + hydrogencarbonate. Forms oxaloacetate, a four-carbon dicarboxylic acid source for the tricarboxylic acid cycle. This Pseudomonas entomophila (strain L48) protein is Phosphoenolpyruvate carboxylase.